Reading from the N-terminus, the 185-residue chain is Homeobox protein TGIF2LY (185 aa).

2 disordered regions span residues 1–58 (MEAA…GNLP) and 166–185 (RCQERSNQIRSRPLARSSPE). A compositionally biased stretch (polar residues) spans 21–39 (AKTQSPAQDTSIMSRNNAD). A DNA-binding region (homeobox; TALE-type) is located at residues 48-111 (EHKKKRKGNL…INARRRILPD (64 aa)).

This sequence belongs to the TALE/TGIF homeobox family. As to expression, specifically expressed in adult testis.

The protein localises to the nucleus. Its function is as follows. May have a transcription role in testis. May act as a competitor/regulator of TGIF2LX. In Homo sapiens (Human), this protein is Homeobox protein TGIF2LY (TGIF2LY).